A 252-amino-acid chain; its full sequence is 2-succinyl-6-hydroxy-2,4-cyclohexadiene-1-carboxylate synthase (252 aa).

This sequence belongs to the AB hydrolase superfamily. MenH family. In terms of assembly, monomer.

It catalyses the reaction 5-enolpyruvoyl-6-hydroxy-2-succinyl-cyclohex-3-ene-1-carboxylate = (1R,6R)-6-hydroxy-2-succinyl-cyclohexa-2,4-diene-1-carboxylate + pyruvate. It functions in the pathway quinol/quinone metabolism; 1,4-dihydroxy-2-naphthoate biosynthesis; 1,4-dihydroxy-2-naphthoate from chorismate: step 3/7. It participates in quinol/quinone metabolism; menaquinone biosynthesis. Catalyzes a proton abstraction reaction that results in 2,5-elimination of pyruvate from 2-succinyl-5-enolpyruvyl-6-hydroxy-3-cyclohexene-1-carboxylate (SEPHCHC) and the formation of 2-succinyl-6-hydroxy-2,4-cyclohexadiene-1-carboxylate (SHCHC). The chain is 2-succinyl-6-hydroxy-2,4-cyclohexadiene-1-carboxylate synthase from Escherichia coli O7:K1 (strain IAI39 / ExPEC).